The chain runs to 184 residues: Photosystem I assembly protein Ycf4 (184 aa).

Helical transmembrane passes span 21 to 43 and 68 to 90; these read NFCW…ISSY and FYGI…NVGS.

Belongs to the Ycf4 family.

It is found in the plastid. The protein localises to the chloroplast thylakoid membrane. Functionally, seems to be required for the assembly of the photosystem I complex. In Physcomitrium patens (Spreading-leaved earth moss), this protein is Photosystem I assembly protein Ycf4.